Consider the following 64-residue polypeptide: Long neurotoxin MS5 (64 aa).

5 disulfide bridges follow: Cys-3–Cys-24, Cys-6–Cys-11, Cys-17–Cys-41, Cys-45–Cys-57, and Cys-58–Cys-63.

The protein belongs to the three-finger toxin family. Ancestral subfamily. Expressed by the venom gland.

The protein resides in the secreted. Produces peripheral paralysis by blocking neuromuscular transmission at the postsynaptic site. Very weak inhibitor of the endogenous nicotinic acetylcholine receptors (nAChR) in the human rhabdomyosarcoma TE 671 cell line. This neurotoxin is lethal to zebrafish by injection at the back of the dorsolateral region, but is not toxic to mice by intraperitoneal injection. This Micrurus surinamensis (Surinam coral snake) protein is Long neurotoxin MS5.